Consider the following 270-residue polypeptide: Replication protein A 32 kDa subunit (270 aa).

At M1 the chain carries N-acetylmethionine. 2 positions are modified to phosphoserine; by PRKDC: S4 and S8. Residues 20–41 (YTQSPGGFGSPTPSQAEKKSRV) form a disordered region. The residue at position 21 (T21) is a Phosphothreonine; by PRKDC. Residue S23 is modified to Phosphoserine; by CDK2. Position 29 is a phosphoserine; by CDK1 (S29). Residue S33 is modified to Phosphoserine; by PRKDC. Glycyl lysine isopeptide (Lys-Gly) (interchain with G-Cter in ubiquitin) cross-links involve residues K37 and K38. Residues 74–148 (VTIVGIIRHA…KSLVAFKIIP (75 aa)) constitute a DNA-binding region (OB). The interval 171-192 (KPNSQASAGRPSMSNPGMSEPG) is disordered. The interval 187–270 (GMSEPGNFSG…DDHFKSTDAE (84 aa)) is interaction with RAD52, TIPIN, UNG and XPA.

It belongs to the replication factor A protein 2 family. As to quaternary structure, component of the replication protein A complex (RPA/RP-A), a heterotrimeric complex composed of RPA1, RPA2 and RPA3. Interacts with PRPF19; the PRP19-CDC5L complex is recruited to the sites of DNA repair where it ubiquitinates the replication protein A complex (RPA). Interacts with SERTAD3. Interacts with TIPIN. Interacts with TIMELESS. Interacts with PPP4R2; the interaction is direct, DNA damage-dependent and mediates the recruitment of the PP4 catalytic subunit PPP4C. Interacts (hyperphosphorylated) with RAD51. Interacts with SMARCAL1; the interaction is direct and mediates the recruitment to the RPA complex of SMARCAL1. Interacts with RAD52 and XPA; those interactions are direct and associate RAD52 and XPA to the RPA complex. Interacts with FBH1. Interacts with ETAA1; the interaction is direct and promotes ETAA1 recruitment at stalled replication forks. Interacts with DDI2. Interacts (in unphosphorylated form via N-terminus) with EIF4EBP3; the interaction enhances EIF4EBP3-mediated inhibition of EIF4E-mediated mRNA nuclear export. Interacts with nuclear UNG (isoform 2); this interaction mediates UNG recruitment to RPA-coated single-stranded DNA at stalled replication forks. In terms of processing, differentially phosphorylated throughout the cell cycle, becoming phosphorylated at the G1-S transition and dephosphorylated in late mitosis. Mainly phosphorylated at Ser-23 and Ser-29, by cyclin A-CDK2 and cyclin B-CDK1, respectively during DNA replication and mitosis. Dephosphorylation may require the serine/threonine-protein phosphatase 4. Phosphorylation at Ser-23 and Ser-29 is a prerequisite for further phosphorylation. Becomes hyperphosphorylated on additional residues including Ser-4, Ser-8, Thr-21 and Ser-33 in response to DNA damage. Hyperphosphorylation is mediated by ATM, ATR and PRKDC. Primarily recruited to DNA repair nuclear foci as a hypophosphorylated form it undergoes subsequent hyperphosphorylation, catalyzed by ATR. Hyperphosphorylation is required for RAD51 recruitment to chromatin and efficient DNA repair. Phosphorylation at Thr-21 depends upon RFWD3 presence. DNA damage-induced 'Lys-63'-linked polyubiquitination by PRPF19 mediates ATRIP recruitment to the RPA complex at sites of DNA damage and activation of ATR. Ubiquitinated by RFWD3 at stalled replication forks in response to DNA damage: ubiquitination by RFWD3 does not lead to degradation by the proteasome and promotes removal of the RPA complex from stalled replication forks, promoting homologous recombination.

It is found in the nucleus. It localises to the PML body. Its function is as follows. As part of the heterotrimeric replication protein A complex (RPA/RP-A), binds and stabilizes single-stranded DNA intermediates, that form during DNA replication or upon DNA stress. It prevents their reannealing and in parallel, recruits and activates different proteins and complexes involved in DNA metabolism. Thereby, it plays an essential role both in DNA replication and the cellular response to DNA damage. In the cellular response to DNA damage, the RPA complex controls DNA repair and DNA damage checkpoint activation. Through recruitment of ATRIP activates the ATR kinase a master regulator of the DNA damage response. It is required for the recruitment of the DNA double-strand break repair factors RAD51 and RAD52 to chromatin in response to DNA damage. Also recruits to sites of DNA damage proteins like XPA and XPG that are involved in nucleotide excision repair and is required for this mechanism of DNA repair. Also plays a role in base excision repair (BER) probably through interaction with UNG. Also recruits SMARCAL1/HARP, which is involved in replication fork restart, to sites of DNA damage. May also play a role in telomere maintenance. The chain is Replication protein A 32 kDa subunit from Mus musculus (Mouse).